The following is a 652-amino-acid chain: Leucine-rich repeat-containing protein 4 (652 aa).

A signal peptide spans 1 to 40 (MKLLWQVTVHHTWNAVLLPVVYLTAQVWILCAAIAAAASA). An LRRNT domain is found at 41–74 (GPQNCPSVCSCSNQFSKVVCTRRGLSEVPQGIPS). Residues 41–526 (GPQNCPSVCS…SLDEVMKTTK (486 aa)) lie on the Extracellular side of the membrane. 2 cysteine pairs are disulfide-bonded: Cys45/Cys51 and Cys49/Cys60. LRR repeat units follow at residues 75 to 96 (NTRY…TFRH), 99 to 120 (HLEV…AFNG), 123 to 144 (SLNT…AFEY), 147 to 168 (KLRE…AFNR), 171 to 193 (SLMR…AFEG), 196 to 217 (NLKY…TPLV), 218 to 239 (GLEE…SFHG), 242 to 263 (SLKK…AFDG), and 266 to 287 (SLVE…LFTP). Asn276, Asn321, Asn362, Asn387, Asn409, Asn433, Asn439, and Asn449 each carry an N-linked (GlcNAc...) asparagine glycan. The LRRCT domain maps to 299–351 (NPWNCDCDILWLAWWLREYIPTNSTCCGRCHAPMHMRGRYLVEVDQAAFQCSA). Intrachain disulfides connect Cys303/Cys328 and Cys305/Cys349. The region spanning 352 to 441 (PFIMDAPRDL…SNASAYLNVS (90 aa)) is the Ig-like domain. Cys373 and Cys423 are disulfide-bonded. The helical transmembrane segment at 527–547 (IIIGCFVAVTLLAAAMLIVFY) threads the bilayer. Topologically, residues 548–652 (KLRKRHQQRS…TKDKVQETQI (105 aa)) are cytoplasmic.

In terms of assembly, interacts (via LRR repeats) with NTNG2. Interacts with DLG4. Forms a complex with DLG4 and with NMDA receptors. N-glycosylated. As to expression, specifically expressed in brain. In the hippocampus, parietal cortex and piriform cortex expressed in proximal segments of CA1 pyramidal neurons.

It is found in the membrane. The protein localises to the postsynaptic cell membrane. In terms of biological role, synaptic adhesion protein. Regulates the formation of exitatory synapses through the recruitment of pre-and-postsynaptic proteins. Organize the lamina/pathway-specific differentiation of dendrites. Plays an important role for auditory synaptic responses. Involved in the suppression of glioma. This Mus musculus (Mouse) protein is Leucine-rich repeat-containing protein 4 (Lrrc4).